Consider the following 252-residue polypeptide: Putative cytosolic acyl coenzyme A thioester hydrolase-like (252 aa).

2 HotDog ACOT-type domains span residues Met-1–Thr-90 and Ser-146–Thr-252.

Homodimer. As to expression, expressed in all tissues examined. Up-regulated in nasopharyngeal carcinoma (at protein level).

Its subcellular location is the cytoplasm. It carries out the reaction hexadecanoyl-CoA + H2O = hexadecanoate + CoA + H(+). Its function is as follows. Acyl-CoA thioesterases are a group of enzymes that catalyze the hydrolysis of acyl-CoAs to the free fatty acid and coenzyme A (CoASH), providing the potential to regulate intracellular levels of acyl-CoAs, free fatty acids and CoASH. This is Putative cytosolic acyl coenzyme A thioester hydrolase-like (ACOT7L) from Homo sapiens (Human).